Consider the following 299-residue polypeptide: N-acetylmuramic acid 6-phosphate etherase (299 aa).

The region spanning 54–217 (TIAQYKKGGR…STITMVGVGK (164 aa)) is the SIS domain. The Proton donor role is filled by Glu-82. Glu-113 is an active-site residue.

It belongs to the GCKR-like family. MurNAc-6-P etherase subfamily. As to quaternary structure, homodimer.

It carries out the reaction N-acetyl-D-muramate 6-phosphate + H2O = N-acetyl-D-glucosamine 6-phosphate + (R)-lactate. It functions in the pathway amino-sugar metabolism; N-acetylmuramate degradation. In terms of biological role, specifically catalyzes the cleavage of the D-lactyl ether substituent of MurNAc 6-phosphate, producing GlcNAc 6-phosphate and D-lactate. This Staphylococcus aureus (strain USA300) protein is N-acetylmuramic acid 6-phosphate etherase.